We begin with the raw amino-acid sequence, 290 residues long: 33 kDa chaperonin (290 aa).

2 disulfide bridges follow: Cys231–Cys233 and Cys263–Cys266.

Belongs to the HSP33 family. Under oxidizing conditions two disulfide bonds are formed involving the reactive cysteines. Under reducing conditions zinc is bound to the reactive cysteines and the protein is inactive.

It is found in the cytoplasm. In terms of biological role, redox regulated molecular chaperone. Protects both thermally unfolding and oxidatively damaged proteins from irreversible aggregation. Plays an important role in the bacterial defense system toward oxidative stress. The sequence is that of 33 kDa chaperonin from Thermotoga maritima (strain ATCC 43589 / DSM 3109 / JCM 10099 / NBRC 100826 / MSB8).